Here is a 695-residue protein sequence, read N- to C-terminus: UvrABC system protein B (695 aa).

The Helicase ATP-binding domain occupies 45–434; it reads EGIEDGLSFQ…QVVEQVVRPT (390 aa). 58–65 is a binding site for ATP; sequence GVTGSGKT. Residues 111-134 carry the Beta-hairpin motif; the sequence is YYDYYQPEAYVPQRDLFIEKDSSI. The 154-residue stretch at 449–602 folds into the Helicase C-terminal domain; the sequence is QVDDLLSEIN…QMAFNEANGI (154 aa). One can recognise a UVR domain in the interval 646–681; it reads SKEIKRLEKLMMDHAKNLEFEKAAQVRDQLAKLKAQ.

Belongs to the UvrB family. In terms of assembly, forms a heterotetramer with UvrA during the search for lesions. Interacts with UvrC in an incision complex.

The protein resides in the cytoplasm. Its function is as follows. The UvrABC repair system catalyzes the recognition and processing of DNA lesions. A damage recognition complex composed of 2 UvrA and 2 UvrB subunits scans DNA for abnormalities. Upon binding of the UvrA(2)B(2) complex to a putative damaged site, the DNA wraps around one UvrB monomer. DNA wrap is dependent on ATP binding by UvrB and probably causes local melting of the DNA helix, facilitating insertion of UvrB beta-hairpin between the DNA strands. Then UvrB probes one DNA strand for the presence of a lesion. If a lesion is found the UvrA subunits dissociate and the UvrB-DNA preincision complex is formed. This complex is subsequently bound by UvrC and the second UvrB is released. If no lesion is found, the DNA wraps around the other UvrB subunit that will check the other stand for damage. The chain is UvrABC system protein B from Cupriavidus pinatubonensis (strain JMP 134 / LMG 1197) (Cupriavidus necator (strain JMP 134)).